Here is a 576-residue protein sequence, read N- to C-terminus: Zinc finger protein 791 (576 aa).

Positions 4–90 (VAFEDVSVSF…AENFSPNLSV (87 aa)) constitute a KRAB domain. 17 consecutive C2H2-type zinc fingers follow at residues 100-122 (YECTICGKAFMRLSSLTRHMRSH), 132-154 (YKCKECEKAFSYLKSFQRHERSH), 160-182 (YKCKQCGKTFIYHQPFQRHERTH), 188-210 (YECKQCGKALSCSSSLRVHERIH), 216-238 (YECKQCGKAFSCSSSIRVHERTH), 244-266 (YACKECGKAFISHTSVLTHMITH), 272-294 (YKCKECGKAFIFPSFLRVHERIH), 300-322 (YKCKQCGKAFRCSTSIQIHERIH), 328-350 (YKCKECGKSFSARPAFRVHVRVH), 356-378 (YKCKECGKAFSRISYFRIHERTH), 384-406 (YECKKCGKTFNYPLDLKIHKRNH), 412-434 (YECKECAKTFISLENFRRHMITH), 440-462 (YKCRDCGKVFIFPSALRTHERTH), 468-490 (YECKQCGKAFSCSSYIRIHKRTH), 496-518 (YECKECGKAFIYPTSFQGHMRMH), 524-546 (YKCKECGKAFSLHSSFQRHTRIH), and 552-574 (LECKQCGKAFSVSTSLKKHMRMH).

Belongs to the krueppel C2H2-type zinc-finger protein family.

It is found in the nucleus. Its function is as follows. May be involved in transcriptional regulation. The protein is Zinc finger protein 791 (ZNF791) of Homo sapiens (Human).